We begin with the raw amino-acid sequence, 712 residues long: Polyribonucleotide nucleotidyltransferase (712 aa).

Mg(2+) is bound by residues Asp485 and Asp491. One can recognise a KH domain in the interval 552 to 611 (PRIHTMKIDPKKIKDVIGKGGAVIRSLTEETGTSIDIDDDGTVKIAATDNNAAKMVMSRI). The S1 motif domain maps to 621-689 (NAIYTGKVSR…RQNRIRLTMK (69 aa)).

This sequence belongs to the polyribonucleotide nucleotidyltransferase family. As to quaternary structure, component of the RNA degradosome, which is a multiprotein complex involved in RNA processing and mRNA degradation. Requires Mg(2+) as cofactor.

The protein localises to the cytoplasm. The enzyme catalyses RNA(n+1) + phosphate = RNA(n) + a ribonucleoside 5'-diphosphate. In terms of biological role, involved in mRNA degradation. Catalyzes the phosphorolysis of single-stranded polyribonucleotides processively in the 3'- to 5'-direction. This chain is Polyribonucleotide nucleotidyltransferase, found in Haemophilus ducreyi (strain 35000HP / ATCC 700724).